The following is a 433-amino-acid chain: Protein translocase subunit SecY (433 aa).

10 helical membrane passes run 17–37 (IVFT…PIPG), 71–91 (IFAL…LMSV), 117–137 (LTVL…ESIV), 141–161 (GPVV…TLVV), 184–204 (LIIF…MFEL), 212–232 (PLIA…IIFF), 268–288 (GVIP…LANF), 310–330 (YILL…AIVF), 366–386 (LTVI…LLMN), and 388–408 (YVIS…VVLD).

The protein belongs to the SecY/SEC61-alpha family. Component of the Sec protein translocase complex. Heterotrimer consisting of SecY, SecE and SecG subunits. The heterotrimers can form oligomers, although 1 heterotrimer is thought to be able to translocate proteins. Interacts with the ribosome. Interacts with SecDF, and other proteins may be involved. Interacts with SecA.

It is found in the cell inner membrane. Its function is as follows. The central subunit of the protein translocation channel SecYEG. Consists of two halves formed by TMs 1-5 and 6-10. These two domains form a lateral gate at the front which open onto the bilayer between TMs 2 and 7, and are clamped together by SecE at the back. The channel is closed by both a pore ring composed of hydrophobic SecY resides and a short helix (helix 2A) on the extracellular side of the membrane which forms a plug. The plug probably moves laterally to allow the channel to open. The ring and the pore may move independently. This chain is Protein translocase subunit SecY, found in Rickettsia felis (strain ATCC VR-1525 / URRWXCal2) (Rickettsia azadi).